Here is a 798-residue protein sequence, read N- to C-terminus: Integrin beta-1-B (798 aa).

Positions 1–21 (MARYPVFTFVFLICLVLCTNA) are cleaved as a signal peptide. Over 22 to 727 (QQGGTECLKA…VKEPECPSGP (706 aa)) the chain is Extracellular. Positions 27–77 (ECLKANAKSCGECIQAGPNCGWCTKVDFLQEGEPTSARCDDLAALKTKGCP) constitute a PSI domain. Disulfide bonds link cysteine 28-cysteine 46, cysteine 36-cysteine 464, cysteine 39-cysteine 65, cysteine 49-cysteine 76, cysteine 206-cysteine 212, cysteine 260-cysteine 300, cysteine 400-cysteine 414, cysteine 434-cysteine 462, cysteine 466-cysteine 486, cysteine 477-cysteine 489, cysteine 491-cysteine 500, cysteine 502-cysteine 533, cysteine 516-cysteine 531, cysteine 525-cysteine 536, cysteine 538-cysteine 553, cysteine 555-cysteine 576, cysteine 560-cysteine 574, cysteine 568-cysteine 579, cysteine 581-cysteine 590, cysteine 592-cysteine 615, cysteine 599-cysteine 613, cysteine 607-cysteine 618, cysteine 620-cysteine 630, cysteine 633-cysteine 636, cysteine 640-cysteine 691, cysteine 646-cysteine 665, cysteine 649-cysteine 661, and cysteine 699-cysteine 723. Residues 77 to 106 (PEDDIQNPRGRKQKLKDIPITSKGKGERMD) are disordered. Asparagine 109 and asparagine 131 each carry an N-linked (GlcNAc...) asparagine glycan. Residues 139–377 (DYPIDLYYLM…QLIIDSYNSL (239 aa)) enclose the VWFA domain. Mg(2+) is bound by residues serine 151 and serine 153. 4 residues coordinate Ca(2+): serine 153, aspartate 156, aspartate 157, and glutamate 188. N-linked (GlcNAc...) asparagine glycans are attached at residues asparagine 211 and asparagine 223. Asparagine 243, aspartate 245, proline 247, and glutamate 248 together coordinate Ca(2+). A Mg(2+)-binding site is contributed by glutamate 248. N-linked (GlcNAc...) asparagine glycans are attached at residues asparagine 268 and asparagine 362. The N-linked (GlcNAc...) asparagine glycan is linked to asparagine 416. 4 consecutive I-EGF domains span residues 466 to 501 (CQDKGTPNSPECHFGNGTFECGACRCNEGRIGKECE), 502 to 554 (CSTD…KYCE), 555 to 591 (CDNFNCDRSNGLICGGKGVCKCRVCECFPNYSGSACD), and 592 to 631 (CSEDTSTCMAKNGQICNGRGICDCGRCKCTDPKFQGPTCE). Asparagine 481 is a glycosylation site (N-linked (GlcNAc...) asparagine). Asparagine 520 is a glycosylation site (N-linked (GlcNAc...) asparagine). Residue asparagine 584 is glycosylated (N-linked (GlcNAc...) asparagine). Asparagine 669 carries N-linked (GlcNAc...) asparagine glycosylation. Residues 728 to 751 (DIIPIVAGVVAGIVLIGLALLLIW) form a helical membrane-spanning segment. Residues 752 to 798 (KLLMIIHDRREFAKFEKEKMNAKWDTGENPIYKSAVATVVNPKYEGK) are Cytoplasmic-facing. Tyrosine 783 carries the post-translational modification Phosphotyrosine.

The protein belongs to the integrin beta chain family. In terms of assembly, heterodimer of an alpha and a beta subunit.

The protein localises to the cell membrane. It localises to the cell projection. It is found in the invadopodium membrane. The protein resides in the ruffle membrane. Its subcellular location is the melanosome. The protein localises to the cleavage furrow. It localises to the lamellipodium. It is found in the ruffle. In terms of biological role, beta integrins associate with alpha subunits to form receptor complexes that recognize the sequence R-G-D in a wide array of ligands. May be involved in osteoblast compaction. May play role in myoblast differentiation and fusion during skeletal myogenesis. The protein is Integrin beta-1-B (itgb1-b) of Xenopus laevis (African clawed frog).